Here is a 142-residue protein sequence, read N- to C-terminus: Large ribosomal subunit protein uL16 (142 aa).

It belongs to the universal ribosomal protein uL16 family. As to quaternary structure, part of the 50S ribosomal subunit.

Functionally, binds 23S rRNA and is also seen to make contacts with the A and possibly P site tRNAs. The sequence is that of Large ribosomal subunit protein uL16 from Mycoplasmopsis pulmonis (strain UAB CTIP) (Mycoplasma pulmonis).